The sequence spans 115 residues: Large ribosomal subunit protein bL20 (115 aa).

This sequence belongs to the bacterial ribosomal protein bL20 family.

In terms of biological role, binds directly to 23S ribosomal RNA and is necessary for the in vitro assembly process of the 50S ribosomal subunit. It is not involved in the protein synthesizing functions of that subunit. In Chlorobium phaeobacteroides (strain BS1), this protein is Large ribosomal subunit protein bL20.